The sequence spans 361 residues: MAIEEKLESLTSRHAELSAHLADPTTVSDSKRFAAYSKEFSDLEPVVAAWQAHLAILQQLAETDEMLAEAGDDAEMRQMAREERETLKNKLEQSQKHLHLMLLPKDPNDDKNVILEIRAGTGGEEAALFVSDLFRMYGRFAEIKGWRIEMLSSSATDLGGYKELIAMVQGKGAYMGLKYESGVHRVQRIPVTETGGRIHTSAVTVAILPEADEVELHIEDKDLRIDVYRSSGPGGQSVNTTDSAVRITHLPTGLVVICQDEKSQHKNKAKAMKVLQARLLDAQQQAADSQRAEARKGQVGSGDRSERIRTYNFPQSRVTDHRINLTLHKLDQVLQGGLAEVVDALTAHDQASKLAHLGGGD.

Glutamine 236 carries the post-translational modification N5-methylglutamine. The interval 286–306 (AADSQRAEARKGQVGSGDRSE) is disordered.

This sequence belongs to the prokaryotic/mitochondrial release factor family. In terms of processing, methylated by PrmC. Methylation increases the termination efficiency of RF1.

The protein localises to the cytoplasm. Its function is as follows. Peptide chain release factor 1 directs the termination of translation in response to the peptide chain termination codons UAG and UAA. In Magnetococcus marinus (strain ATCC BAA-1437 / JCM 17883 / MC-1), this protein is Peptide chain release factor 1.